The chain runs to 155 residues: MYPAHLLVLLAVCVSLLGASAISPRPLNLIQFSQLIQCANKGKRPTLHYMDYGCYCGKGGSGTPVDALDRCCKTHDDCYGQAGKKGCIPFVTLYNFGCFPGAPQCGKGNTCQRFVCACDLKAALCFAKSPYNNNNYNIDTKKKCQTLIYARLQTQ.

Residues 1–21 form the signal peptide; sequence MYPAHLLVLLAVCVSLLGASA. A propeptide spanning residues 22 to 27 is cleaved from the precursor; it reads ISPRPL. 7 disulfide bridges follow: C38–C98, C54–C144, C56–C72, C71–C125, C78–C118, C87–C111, and C105–C116. Y55, G57, and G59 together coordinate Ca(2+). H75 is a catalytic residue. D76 is a binding site for Ca(2+). D119 is an active-site residue.

It belongs to the phospholipase A2 family. Group I subfamily. D49 sub-subfamily. The cofactor is Ca(2+). Expressed by the venom gland.

Its subcellular location is the secreted. The catalysed reaction is a 1,2-diacyl-sn-glycero-3-phosphocholine + H2O = a 1-acyl-sn-glycero-3-phosphocholine + a fatty acid + H(+). Functionally, snake venom phospholipase A2 (PLA2) that inhibits neuromuscular transmission by blocking acetylcholine release from the nerve termini. PLA2 catalyzes the calcium-dependent hydrolysis of the 2-acyl groups in 3-sn-phosphoglycerides. The sequence is that of Basic phospholipase A2 PC9 from Laticauda colubrina (Yellow-lipped sea krait).